The chain runs to 199 residues: MAFELPKLPYAFDALEPHIDKETMEIHHDKHHNTYVTKLNAVVEGTDLEAKSIEEIVANLDSVPSDIQTAVRNNGGGHLNHSLFWELLTPNSEEKGEVVEKIKEQWGSLDEFKKEFADKAAARFGSGWAWLVVNNGQLEIVTTPNQDNPLTEGKTPILGLDVWEHAYYLKYQNKRPDYISAFWNVVNWEKVDELYNAAK.

Residues His27, His81, Asp161, and His165 each contribute to the Fe(3+) site. Positions 27, 81, 161, and 165 each coordinate Mn(2+).

It belongs to the iron/manganese superoxide dismutase family. Homodimer. The cofactor is Mn(2+). Requires Fe(3+) as cofactor.

It catalyses the reaction 2 superoxide + 2 H(+) = H2O2 + O2. Destroys superoxide anion radicals which are normally produced within the cells and which are toxic to biological systems. Catalyzes the dismutation of superoxide anion radicals into O2 and H2O2 by successive reduction and oxidation of the transition metal ion at the active site. This is Superoxide dismutase [Mn/Fe] (sodA) from Staphylococcus epidermidis.